Consider the following 80-residue polypeptide: Translation initiation factor IF-1, chloroplastic (80 aa).

In terms of domain architecture, S1-like spans 1–72 (MKEHDLINME…TKGRILYRIR (72 aa)).

This sequence belongs to the IF-1 family. In terms of assembly, component of the 30S ribosomal translation pre-initiation complex which assembles on the 30S ribosome in the order IF-2 and IF-3, IF-1 and N-formylmethionyl-tRNA(fMet); mRNA recruitment can occur at any time during PIC assembly.

The protein resides in the plastid. The protein localises to the chloroplast. Functionally, one of the essential components for the initiation of protein synthesis. Stabilizes the binding of IF-2 and IF-3 on the 30S subunit to which N-formylmethionyl-tRNA(fMet) subsequently binds. Helps modulate mRNA selection, yielding the 30S pre-initiation complex (PIC). Upon addition of the 50S ribosomal subunit IF-1, IF-2 and IF-3 are released leaving the mature 70S translation initiation complex. The sequence is that of Translation initiation factor IF-1, chloroplastic from Psilotum nudum (Whisk fern).